Here is a 335-residue protein sequence, read N- to C-terminus: Cathepsin B (335 aa).

An N-terminal signal peptide occupies residues 1-19; the sequence is MWQLLATLSCLLVLTSARS. A propeptide spans 20–79 (activation peptide); that stretch reads SLHFPPLSDEMVNYVNKQNTTWKAGHNFYNVDLSYVKKLCGAILGGPKLPQRDAFAADMV. Cystine bridges form between cysteine 93–cysteine 122, cysteine 105–cysteine 150, cysteine 141–cysteine 207, cysteine 142–cysteine 146, cysteine 179–cysteine 211, and cysteine 187–cysteine 198. Residue cysteine 108 is part of the active site. Asparagine 192 is a glycosylation site (N-linked (GlcNAc...) asparagine). An N6-acetyllysine modification is found at lysine 220. Catalysis depends on residues histidine 278 and asparagine 298. The propeptide occupies 333–335; sequence HQH.

The protein belongs to the peptidase C1 family. Dimer of a heavy chain and a light chain cross-linked by a disulfide bond. Interacts with SRPX2. Directly interacts with SHKBP1.

It is found in the lysosome. Its subcellular location is the melanosome. The protein resides in the secreted. The protein localises to the extracellular space. It localises to the apical cell membrane. The enzyme catalyses Hydrolysis of proteins with broad specificity for peptide bonds. Preferentially cleaves -Arg-Arg-|-Xaa bonds in small molecule substrates (thus differing from cathepsin L). In addition to being an endopeptidase, shows peptidyl-dipeptidase activity, liberating C-terminal dipeptides.. In terms of biological role, thiol protease which is believed to participate in intracellular degradation and turnover of proteins. Cleaves matrix extracellular phosphoglycoprotein MEPE. Involved in the solubilization of cross-linked TG/thyroglobulin in the thyroid follicle lumen. Has also been implicated in tumor invasion and metastasis. This chain is Cathepsin B (CTSB), found in Ovis aries (Sheep).